The following is a 215-amino-acid chain: Cytidylate kinase (215 aa).

Residue 10–18 (GPAASGKGT) coordinates ATP.

The protein belongs to the cytidylate kinase family. Type 1 subfamily.

It is found in the cytoplasm. The catalysed reaction is CMP + ATP = CDP + ADP. The enzyme catalyses dCMP + ATP = dCDP + ADP. The polypeptide is Cytidylate kinase (Bartonella tribocorum (strain CIP 105476 / IBS 506)).